Reading from the N-terminus, the 278-residue chain is Large ribosomal subunit protein uL2 (278 aa).

Disordered regions lie at residues 29–57 (PEKS…QGGG) and 224–278 (VAMN…NKKR). Residues 258–278 (RSPKKASNKYIVRRRKTNKKR) are compositionally biased toward basic residues.

The protein belongs to the universal ribosomal protein uL2 family. In terms of assembly, part of the 50S ribosomal subunit. Forms a bridge to the 30S subunit in the 70S ribosome.

Functionally, one of the primary rRNA binding proteins. Required for association of the 30S and 50S subunits to form the 70S ribosome, for tRNA binding and peptide bond formation. It has been suggested to have peptidyltransferase activity; this is somewhat controversial. Makes several contacts with the 16S rRNA in the 70S ribosome. This is Large ribosomal subunit protein uL2 from Streptomyces griseus subsp. griseus (strain JCM 4626 / CBS 651.72 / NBRC 13350 / KCC S-0626 / ISP 5235).